The following is a 311-amino-acid chain: Aspartate carbamoyltransferase catalytic subunit (311 aa).

Carbamoyl phosphate contacts are provided by arginine 55 and threonine 56. Lysine 85 is an L-aspartate binding site. Residues arginine 106, histidine 135, and glutamine 138 each coordinate carbamoyl phosphate. Positions 168 and 230 each coordinate L-aspartate. The carbamoyl phosphate site is built by leucine 268 and proline 269.

Belongs to the aspartate/ornithine carbamoyltransferase superfamily. ATCase family. Heterododecamer (2C3:3R2) of six catalytic PyrB chains organized as two trimers (C3), and six regulatory PyrI chains organized as three dimers (R2).

It catalyses the reaction carbamoyl phosphate + L-aspartate = N-carbamoyl-L-aspartate + phosphate + H(+). Its pathway is pyrimidine metabolism; UMP biosynthesis via de novo pathway; (S)-dihydroorotate from bicarbonate: step 2/3. Its function is as follows. Catalyzes the condensation of carbamoyl phosphate and aspartate to form carbamoyl aspartate and inorganic phosphate, the committed step in the de novo pyrimidine nucleotide biosynthesis pathway. The protein is Aspartate carbamoyltransferase catalytic subunit of Pectobacterium carotovorum subsp. carotovorum (strain PC1).